Consider the following 185-residue polypeptide: Ribosome-recycling factor (185 aa).

It belongs to the RRF family.

It localises to the cytoplasm. Responsible for the release of ribosomes from messenger RNA at the termination of protein biosynthesis. May increase the efficiency of translation by recycling ribosomes from one round of translation to another. This chain is Ribosome-recycling factor, found in Laribacter hongkongensis (strain HLHK9).